A 257-amino-acid polypeptide reads, in one-letter code: Hydroxyacylglutathione hydrolase (257 aa).

The Zn(2+) site is built by histidine 54, histidine 56, aspartate 58, histidine 59, histidine 113, aspartate 137, and histidine 175.

Belongs to the metallo-beta-lactamase superfamily. Glyoxalase II family. As to quaternary structure, monomer. It depends on Zn(2+) as a cofactor.

The catalysed reaction is an S-(2-hydroxyacyl)glutathione + H2O = a 2-hydroxy carboxylate + glutathione + H(+). It functions in the pathway secondary metabolite metabolism; methylglyoxal degradation; (R)-lactate from methylglyoxal: step 2/2. Thiolesterase that catalyzes the hydrolysis of S-D-lactoyl-glutathione to form glutathione and D-lactic acid. The sequence is that of Hydroxyacylglutathione hydrolase from Nostoc punctiforme (strain ATCC 29133 / PCC 73102).